The chain runs to 496 residues: Fibronectin type III and SPRY domain-containing protein 1 (496 aa).

Positions 4–99 (QKEALRKIIT…ALESSEELLE (96 aa)) form a coiled coil. One can recognise a COS domain in the interval 105–162 (LLATDSKDFPQAAKQIKDGVTMAPAFRLSLKAKVSDNMSHLMVDFAQERRMLQALTFL). One can recognise a Fibronectin type-III domain in the interval 164-268 (VPSAPVIDLT…EPVTLETPAF (105 aa)). The 210-residue stretch at 268-477 (FMFRLDASTS…VTTGLQVPSS (210 aa)) folds into the B30.2/SPRY domain. The segment at 301–336 (KAREKDGKGRTASPVNSPARGTPSPKRMPSGRGGRD) is disordered. Residues arginine 310 and arginine 320 each carry the omega-N-methylarginine modification.

In terms of assembly, oligomerization is required for binding to microtubules.

It is found in the cytoplasm. It localises to the cytoskeleton. The protein localises to the microtubule organizing center. Its subcellular location is the centrosome. The protein resides in the nucleus. It is found in the cleavage furrow. In terms of biological role, may be involved in microtubule organization and stabilization. This is Fibronectin type III and SPRY domain-containing protein 1 (FSD1) from Bos taurus (Bovine).